A 146-amino-acid chain; its full sequence is Hemoglobin subunit beta (146 aa).

Val-1 is subject to N-acetylvaline. A Globin domain is found at 2–146 (HLSGEEKGAV…VATALAHKYH (145 aa)). At Thr-12 the chain carries Phosphothreonine. Ser-44 carries the phosphoserine modification. At Lys-59 the chain carries N6-acetyllysine. Residue His-63 participates in heme b binding. Lys-82 bears the N6-acetyllysine mark. His-92 provides a ligand contact to heme b. At Cys-93 the chain carries S-nitrosocysteine. N6-acetyllysine is present on Lys-144.

Belongs to the globin family. Heterotetramer of two alpha chains and two beta chains. In terms of tissue distribution, red blood cells.

Functionally, involved in oxygen transport from the lung to the various peripheral tissues. This chain is Hemoglobin subunit beta (HBB), found in Tadarida brasiliensis (Brazilian free-tailed bat).